A 566-amino-acid polypeptide reads, in one-letter code: 4-coumarate--CoA ligase-like 6 (566 aa).

The disordered stretch occupies residues 1-21 (MAATHLHIPPNPKTQTSHQNP). ATP is bound by residues Ser212, Ser213, Gly214, Thr215, Thr216, and Lys220. Tyr263 provides a ligand contact to (E)-4-coumaroyl-AMP. Residue Arg284 participates in CoA binding. The tract at residues 286–356 (DASDVVNVIE…QTLPHVDLIQ (71 aa)) is SBD1. Ala334, Gln356, Gly357, and Thr361 together coordinate (E)-4-coumaroyl-AMP. 5 residues coordinate ATP: Gln356, Gly357, Thr361, Asp442, and Arg457. The interval 357–421 (GYGMTESTAV…IQGPGVMKGY (65 aa)) is SBD2. Residues Lys459 and Lys463 each coordinate (E)-4-coumaroyl-AMP. CoA is bound by residues Lys465 and Gly466. Lys548 is a binding site for ATP. The Microbody targeting signal signature appears at 564–566 (SRL).

It belongs to the ATP-dependent AMP-binding enzyme family. Mg(2+) is required as a cofactor. In terms of tissue distribution, expressed at very low level in leaves.

The protein resides in the peroxisome. The enzyme catalyses (E)-4-coumarate + ATP + CoA = (E)-4-coumaroyl-CoA + AMP + diphosphate. It catalyses the reaction (E)-4-coumarate + ATP + H(+) = (E)-4-coumaroyl-AMP + diphosphate. The catalysed reaction is (E)-4-coumaroyl-AMP + CoA = (E)-4-coumaroyl-CoA + AMP + H(+). It carries out the reaction (E)-ferulate + ATP + CoA = (E)-feruloyl-CoA + AMP + diphosphate. The enzyme catalyses (E)-ferulate + ATP + H(+) = (E)-feruloyl-AMP + diphosphate. It catalyses the reaction (E)-feruloyl-AMP + CoA = (E)-feruloyl-CoA + AMP + H(+). The catalysed reaction is (E)-caffeate + ATP + CoA = (E)-caffeoyl-CoA + AMP + diphosphate. It carries out the reaction (E)-caffeate + ATP + H(+) = (E)-caffeoyl-AMP + diphosphate. The enzyme catalyses (E)-caffeoyl-AMP + CoA = (E)-caffeoyl-CoA + AMP + H(+). It catalyses the reaction (E)-cinnamate + ATP + CoA = (E)-cinnamoyl-CoA + AMP + diphosphate. The catalysed reaction is 4-hydroxybenzoate + ATP + CoA = 4-hydroxybenzoyl-CoA + AMP + diphosphate. It carries out the reaction tetradecanoate + ATP + CoA = tetradecanoyl-CoA + AMP + diphosphate. The enzyme catalyses hexanoate + ATP + CoA = hexanoyl-CoA + AMP + diphosphate. It catalyses the reaction heptanoate + ATP + CoA = heptanoyl-CoA + AMP + diphosphate. Its function is as follows. Contributes to jasmonic acid biosynthesis by initiating the beta-oxidative chain shortening of its precursors. Acts as a carboxylate--CoA ligase that can use preferentially p-coumarate, ferulate and caffeate as substrates and, with a lower efficiency, (E)-cinnamate and 4-hydroxybenzoate as substrates. Involved in the biosynthesis of ubiquinone from phenylalanine by activating the propyl side chain of 4-coumarate, and possibly trans-cinnamate and 4-hydroxybenzoate, for subsequent beta-oxidative shortening and the formation of the benzenoid moiety of ubiquinone. Follows a two-step reaction mechanism, wherein the carboxylate substrate first undergoes adenylation by ATP, followed by a thioesterification in the presence of CoA to yield the final CoA thioester. In Arabidopsis thaliana (Mouse-ear cress), this protein is 4-coumarate--CoA ligase-like 6.